Consider the following 1451-residue polypeptide: Murinoglobulin-2 (1451 aa).

The signal sequence occupies residues 1-27; the sequence is MWKSRRAQLCLFSVLLAFLPSASSLNG. 3 cysteine pairs are disulfide-bonded: Cys48-Cys86, Cys251-Cys276, and Cys269-Cys288. The N-linked (GlcNAc...) asparagine glycan is linked to Asn55. Asn294, Asn313, and Asn500 each carry an N-linked (GlcNAc...) asparagine glycan. 3 disulfides stabilise this stretch: Cys461–Cys555, Cys587–Cys773, and Cys634–Cys680. The segment at 677-734 is bait region; it reads PKICFDSAPMSGPRGKFDLAFSSEVSGTLQKGSSKRPQPEEPPREDPPPKDPLAETIR. The tract at residues 703-728 is disordered; sequence GTLQKGSSKRPQPEEPPREDPPPKDP. Over residues 713 to 728 the composition is skewed to basic and acidic residues; that stretch reads PQPEEPPREDPPPKDP. N-linked (GlcNAc...) asparagine glycosylation is found at Asn749, Asn776, and Asn871. Cystine bridges form between Cys849–Cys885, Cys923–Cys1274, Cys1081–Cys1104, and Cys1298–Cys1444. Residues 974–977 constitute a cross-link (isoglutamyl cysteine thioester (Cys-Gln)); that stretch reads CGEQ. Asn1401 carries an N-linked (GlcNAc...) asparagine glycan.

It belongs to the protease inhibitor I39 (alpha-2-macroglobulin) family. In terms of assembly, monomer. As to expression, plasma.

It is found in the secreted. Its function is as follows. A proteinase activates the inhibitor by specific proteolysis in the bait region, which, by an unknown mechanism leads to reaction at the cysteinyl-glutamyl internal thiol ester site and to a conformational change, whereby the proteinase is trapped and/or covalently bound to the inhibitor. While in the tetrameric proteinase inhibitors steric inhibition is sufficiently strong, monomeric forms need a covalent linkage between the activated glutamyl residue of the original thiol ester and a terminal amino group of a lysine or another nucleophilic group on the proteinase, for inhibition to be effective. The protein is Murinoglobulin-2 (Mug2) of Mus musculus (Mouse).